A 266-amino-acid polypeptide reads, in one-letter code: MADAQFDSALDLLRRLNPRDTKKNLQAITSIVPDLTEDLLSSVDQPLEIRRCSKTKRDYLLCDYNRDGDSYRSPWSNEFDPPLDDGTVPSERVRKLEVAANEAFDVYRELYYEGGVGSVYFWDLDDGFAGVILLKKGVTPGAKSSGEWDSIHVFEATDRARMSHYKLTSTVILHLANETESLGEMDLSGNMTRQVEVDLPVESDASHVANVGRLVEDMELKMRNLLQEVYFGKAKDVVGELRSLASLSEASKERATQREMIMSMHR.

The protein belongs to the F-actin-capping protein beta subunit family. Component of the F-actin capping complex, composed of a heterodimer of an alpha and a beta subunit.

It is found in the cytoplasm. Its subcellular location is the cytoskeleton. The protein resides in the actin patch. Functionally, F-actin-capping proteins bind in a Ca(2+)-independent manner to the fast growing ends of actin filaments (barbed end) thereby blocking the exchange of subunits at these ends. Unlike other capping proteins (such as gelsolin and severin), these proteins do not sever actin filaments. The chain is F-actin-capping protein subunit beta (cap2) from Aspergillus oryzae (strain ATCC 42149 / RIB 40) (Yellow koji mold).